Here is a 260-residue protein sequence, read N- to C-terminus: Methanethiol S-methyltransferase (260 aa).

5 consecutive transmembrane segments (helical) span residues 27-47, 55-75, 107-127, 134-154, and 196-216; these read CYLF…GIGV, PGIT…LFAA, CLVL…VWNV, GLLI…TFLI, and FLIA…FAIL.

Belongs to the nurim family.

The protein localises to the membrane. It carries out the reaction methanethiol + S-adenosyl-L-methionine = dimethyl sulfide + S-adenosyl-L-homocysteine + H(+). Functionally, catalyzes the methylation of methanethiol (MeSH) to yield dimethylsulphide (DMS). This Pseudomonas sp. (strain GM41(2012)) protein is Methanethiol S-methyltransferase.